The primary structure comprises 512 residues: 2-isopropylmalate synthase (512 aa).

The region spanning 4-266 (IQFFDTTLRD…ETNIVLNQFK (263 aa)) is the Pyruvate carboxyltransferase domain. Residues Asp13, His201, His203, and Asn237 each coordinate Mn(2+). The segment at 390–512 (ELKHLQVQYV…SKQADFEEVK (123 aa)) is regulatory domain.

This sequence belongs to the alpha-IPM synthase/homocitrate synthase family. LeuA type 1 subfamily. As to quaternary structure, homodimer. Mn(2+) serves as cofactor.

It is found in the cytoplasm. The enzyme catalyses 3-methyl-2-oxobutanoate + acetyl-CoA + H2O = (2S)-2-isopropylmalate + CoA + H(+). The protein operates within amino-acid biosynthesis; L-leucine biosynthesis; L-leucine from 3-methyl-2-oxobutanoate: step 1/4. Functionally, catalyzes the condensation of the acetyl group of acetyl-CoA with 3-methyl-2-oxobutanoate (2-ketoisovalerate) to form 3-carboxy-3-hydroxy-4-methylpentanoate (2-isopropylmalate). This Listeria monocytogenes serotype 4a (strain HCC23) protein is 2-isopropylmalate synthase.